The following is a 442-amino-acid chain: UDP-N-acetylmuramate--L-alanine ligase (442 aa).

Residue 109-115 (GAHGKTS) participates in ATP binding.

The protein belongs to the MurCDEF family.

Its subcellular location is the cytoplasm. The enzyme catalyses UDP-N-acetyl-alpha-D-muramate + L-alanine + ATP = UDP-N-acetyl-alpha-D-muramoyl-L-alanine + ADP + phosphate + H(+). Its pathway is cell wall biogenesis; peptidoglycan biosynthesis. Cell wall formation. This Streptococcus pyogenes serotype M18 (strain MGAS8232) protein is UDP-N-acetylmuramate--L-alanine ligase.